The following is a 190-amino-acid chain: UPF0301 protein Rpic_0619 (190 aa).

The protein belongs to the UPF0301 (AlgH) family.

The sequence is that of UPF0301 protein Rpic_0619 from Ralstonia pickettii (strain 12J).